The chain runs to 225 residues: Membrane protein (225 aa).

Topologically, residues 1-20 are virion surface; sequence MSNETNCTLDFEQSVELFKE. The helical transmembrane segment at 21 to 41 threads the bilayer; the sequence is YNLFITAFLLFLTIILQYGYA. Topologically, residues 42–51 are intravirion; it reads TRSKFIYILK. A helical transmembrane segment spans residues 52–72; it reads MIVLWCFWPLNIAVGVISCIY. Residues 73 to 77 are Virion surface-facing; that stretch reads PPNTG. A helical membrane pass occupies residues 78–98; it reads GLVAAIILTVFACLSFVGYWI. Residues 99 to 225 are Intravirion-facing; it reads QSIRLFKRCR…VATGGSSLYT (127 aa).

The protein belongs to the gammacoronaviruses M protein family. As to quaternary structure, homomultimer. Interacts with envelope E protein in the budding compartment of the host cell, which is located between endoplasmic reticulum and the Golgi complex. Forms a complex with HE and S proteins. Interacts with nucleocapsid N protein. This interaction probably participates in RNA packaging into the virus.

It is found in the virion membrane. It localises to the host Golgi apparatus membrane. Its function is as follows. Component of the viral envelope that plays a central role in virus morphogenesis and assembly via its interactions with other viral proteins. The polypeptide is Membrane protein (Gallus gallus (Chicken)).